Here is a 427-residue protein sequence, read N- to C-terminus: Adenylosuccinate synthetase (427 aa).

GTP is bound by residues 12 to 18 (GDEGKGK) and 40 to 42 (GHT). Asp13 (proton acceptor) is an active-site residue. 2 residues coordinate Mg(2+): Asp13 and Gly40. Residues 13-16 (DEGK), 38-41 (NAGH), Thr127, Arg141, Gln222, Thr237, and Arg301 each bind IMP. The active-site Proton donor is the His41. 297-303 (VVTKRPR) provides a ligand contact to substrate. GTP contacts are provided by residues Arg303, 329–331 (SLD), and 411–413 (AVG).

It belongs to the adenylosuccinate synthetase family. As to quaternary structure, homodimer. Mg(2+) serves as cofactor.

It is found in the cytoplasm. The catalysed reaction is IMP + L-aspartate + GTP = N(6)-(1,2-dicarboxyethyl)-AMP + GDP + phosphate + 2 H(+). It functions in the pathway purine metabolism; AMP biosynthesis via de novo pathway; AMP from IMP: step 1/2. Its function is as follows. Plays an important role in the de novo pathway of purine nucleotide biosynthesis. Catalyzes the first committed step in the biosynthesis of AMP from IMP. In Leuconostoc mesenteroides subsp. mesenteroides (strain ATCC 8293 / DSM 20343 / BCRC 11652 / CCM 1803 / JCM 6124 / NCDO 523 / NBRC 100496 / NCIMB 8023 / NCTC 12954 / NRRL B-1118 / 37Y), this protein is Adenylosuccinate synthetase.